Consider the following 750-residue polypeptide: Photosystem I P700 chlorophyll a apoprotein A1 (750 aa).

8 helical membrane passes run 70–93, 156–179, 195–219, 291–309, 346–369, 385–411, 433–455, and 531–549; these read VFSAHFGQLSIIFLWLSGMYFHGA, LYCTAIGALVFAALMLFAGWFHYH, LNHHLAGLLGLGSLSWAGHQVHVSL, IAHHHLAIAILFLIAGHMY, WHAQLSLNLAMLGSLTIIVAHHMY, LSLFTHHMWIGGFLIVGAAAHAAIFMV, AIISHLNWVCIFLGFHSFGLYIH, and FLVHHIHAFTIHVTVLILL. [4Fe-4S] cluster-binding residues include Cys573 and Cys582. The next 2 helical transmembrane spans lie at 589–610 and 664–686; these read HVFLGLFWMYNAISVVIFHFSW and LSAYGLFFLGAHFVWAFSLMFLF. His675 contributes to the chlorophyll a' binding site. Chlorophyll a contacts are provided by Met683 and Tyr691. A phylloquinone-binding site is contributed by Trp692. A helical transmembrane segment spans residues 724-744; sequence AVGVTHYLLGGIATTWAFFLA.

It belongs to the PsaA/PsaB family. The PsaA/B heterodimer binds the P700 chlorophyll special pair and subsequent electron acceptors. PSI consists of a core antenna complex that captures photons, and an electron transfer chain that converts photonic excitation into a charge separation. The eukaryotic PSI reaction center is composed of at least 11 subunits. P700 is a chlorophyll a/chlorophyll a' dimer, A0 is one or more chlorophyll a, A1 is one or both phylloquinones and FX is a shared 4Fe-4S iron-sulfur center. is required as a cofactor.

The protein resides in the plastid. The protein localises to the chloroplast thylakoid membrane. The catalysed reaction is reduced [plastocyanin] + hnu + oxidized [2Fe-2S]-[ferredoxin] = oxidized [plastocyanin] + reduced [2Fe-2S]-[ferredoxin]. PsaA and PsaB bind P700, the primary electron donor of photosystem I (PSI), as well as the electron acceptors A0, A1 and FX. PSI is a plastocyanin-ferredoxin oxidoreductase, converting photonic excitation into a charge separation, which transfers an electron from the donor P700 chlorophyll pair to the spectroscopically characterized acceptors A0, A1, FX, FA and FB in turn. Oxidized P700 is reduced on the lumenal side of the thylakoid membrane by plastocyanin. This Olimarabidopsis pumila (Dwarf rocket) protein is Photosystem I P700 chlorophyll a apoprotein A1.